Here is a 589-residue protein sequence, read N- to C-terminus: Acyl-CoA ligase SID4 (589 aa).

Positions 12–20 match the PTS2-type peroxisomal targeting signal motif; that stretch reads RLQQTLNHI. Residues 228 to 236, 367 to 372, Asp458, and Arg473 contribute to the ATP site; these read TSGSTGNPK and SSYGLT. Residue Thr372 coordinates substrate. CoA contacts are provided by residues 481–483, Lys547, and 555–557; these read GGE and FGL. An ATP-binding site is contributed by Lys572.

Belongs to the ATP-dependent AMP-binding enzyme family.

The protein localises to the peroxisome. Its pathway is siderophore biosynthesis. Functionally, acyl-CoA ligase; part of the gene cluster that mediates the biosynthesis of hydroxamate-containing siderophores that play a critical role in virulence via intracellular iron acquisition during macrophage infection. This chain is Acyl-CoA ligase SID4, found in Ajellomyces capsulatus (Darling's disease fungus).